We begin with the raw amino-acid sequence, 207 residues long: dITP/XTP pyrophosphatase (207 aa).

10–15 (TRNAGK) serves as a coordination point for substrate. Mg(2+)-binding residues include glutamate 43 and aspartate 72. Catalysis depends on aspartate 72, which acts as the Proton acceptor. Substrate contacts are provided by residues serine 73, 161 to 164 (FGYD), lysine 184, and 189 to 190 (HR).

Belongs to the HAM1 NTPase family. Homodimer. The cofactor is Mg(2+).

It catalyses the reaction XTP + H2O = XMP + diphosphate + H(+). The enzyme catalyses dITP + H2O = dIMP + diphosphate + H(+). The catalysed reaction is ITP + H2O = IMP + diphosphate + H(+). Its function is as follows. Pyrophosphatase that catalyzes the hydrolysis of nucleoside triphosphates to their monophosphate derivatives, with a high preference for the non-canonical purine nucleotides XTP (xanthosine triphosphate), dITP (deoxyinosine triphosphate) and ITP. Seems to function as a house-cleaning enzyme that removes non-canonical purine nucleotides from the nucleotide pool, thus preventing their incorporation into DNA/RNA and avoiding chromosomal lesions. The polypeptide is dITP/XTP pyrophosphatase (Nitratidesulfovibrio vulgaris (strain ATCC 29579 / DSM 644 / CCUG 34227 / NCIMB 8303 / VKM B-1760 / Hildenborough) (Desulfovibrio vulgaris)).